The following is a 428-amino-acid chain: Cyclin-B1-1 (428 aa).

Belongs to the cyclin family. Cyclin AB subfamily. Interacts with FZR2/CCS52A1, FZR1/CCS52A2 and FZR3/CCS52B. In terms of tissue distribution, expressed in root tip, lateral root apex, shoot apex, leaf primordia, axillary buds, stamen and petal primordia, ovules and developing embryo.

Its subcellular location is the nucleus. In Arabidopsis thaliana (Mouse-ear cress), this protein is Cyclin-B1-1 (CYCB1-1).